The sequence spans 383 residues: NifS-like protein (383 aa).

Residues Ser-58 to Glu-59 and Ser-184 to Asn-186 each bind pyridoxal 5'-phosphate.

The protein belongs to the class-V pyridoxal-phosphate-dependent aminotransferase family. NifS/IscS subfamily. Pyridoxal 5'-phosphate is required as a cofactor.

The protein localises to the virion. In African swine fever virus (strain Badajoz 1971 Vero-adapted) (Ba71V), this protein is NifS-like protein.